Reading from the N-terminus, the 328-residue chain is UPF0194 membrane protein YPTS_1292 (328 aa).

Positions 1-22 (MNRKKIIVAAVIVALLATLAYG) are cleaved as a signal peptide. Coiled coils occupy residues 80-109 (YLNA…REEE) and 142-209 (AVSA…ILLA).

This sequence belongs to the UPF0194 family.

It localises to the periplasm. The chain is UPF0194 membrane protein YPTS_1292 from Yersinia pseudotuberculosis serotype IB (strain PB1/+).